The chain runs to 74 residues: Translational regulator CsrA (74 aa).

It belongs to the CsrA/RsmA family. As to quaternary structure, homodimer. The beta-strands of each monomer intercalate to form a hydrophobic core while the alpha-helices form wings that extend away from the core. Two molecules of FliW interact with 1 homodimer. mRNA and FliW bind to different sites on CsrA.

The protein resides in the cytoplasm. Its function is as follows. A translational regulator that binds mRNA to regulate translation initiation and/or mRNA stability. Usually binds in the 5'-UTR at or near the Shine-Dalgarno sequence preventing ribosome-binding, thus repressing translation. Represses expression of flagellin (hag) in a post-transcriptional fashion. Specifically binds to 2 sites in the 5'-UTR of hag mRNA in a cooperative fashion; the second site overlaps the Shine-Dalgarno sequence and prevents 30S ribosomal subunit binding. Mutation of either binding site abolishes CsrA regulation of hag expression. Repression is greater in the 1A96 than 168 genetic background and higher in minimal than rich medium. Translation repression is antagonized by FliW. Partner switching by flagellin between FliW and CsrA provides a flagellar assembly checkpoint to tightly control the timing of flagellin synthesis. Flagellin binds to assembly factor FliW, freeing CsrA to repress translation of the flagellin mRNA. When the flagellar hook is assembled flagellin is secreted, depleting intracellular flagellin, which frees FliW to interact with CsrA and inhibits CsrA binding to mRNA. This derepresses flagellin translation and provides protein for flagellar assembly. Once the flagellar filament is completed cytoplasmic flagellin levels rise and CsrA translation repression of flagellin reinitiates. Overexpression leads to a dramatic reduction in motility, a significant reduction in flagellin synthesis and reduced flagella assembly. In Bacillus subtilis (strain 168), this protein is Translational regulator CsrA.